The chain runs to 376 residues: MKWLVLLGLVALSECIVILPLKKMKTLRETLREKNLLNNFLEEQAYRLSKNDSKITIHPLRNYLDTAYVGNITIGTPPQEFRVVFDTGSANLWVPCITCTSPACYTHKTFNPQNSSSFREVGSPITIFYGSGIIQGFLGSDTVRIGNLVSPEQSFGLSLEEYGFDSLPFDGILGLAFPAMGIEDTIPIFDNLWSHGAFSEPVFAFYLNTNKPEGSVVMFGGVDHRYYKGELNWIPVSQTSHWQISMNNISMNGTVTACSCGCEALLDTGTSMIYGPTKLVTNIHKLMNARLENSEYVVSCDAVKTLPPVIFNINGIDYPLRPQAYIIKIQNSCRSVFQGGTENSSLNTWILGDIFLRQYFSVFDRKNRRIGLAPAV.

A signal peptide spans M1 to C15. N51 and N71 each carry an N-linked (GlcNAc...) asparagine glycan. The Peptidase A1 domain maps to Y68–A373. D86 is an active-site residue. A disulfide bridge links C99 with C104. N-linked (GlcNAc...) asparagine glycosylation is found at N114, N248, and N252. C258 and C262 form a disulfide bridge. D267 is a catalytic residue. C300 and C333 form a disulfide bridge. N-linked (GlcNAc...) asparagine glycosylation occurs at N343.

It belongs to the peptidase A1 family. In terms of processing, N-Glycosylated; the glycans terminate in either N-acetyl-galactosamine (GalNAc) or N-acetyllactosamine. Terminal GalNAc on Asn-linked glycans is greatly reduced prior to parturition while lactosamine-type N-glycans remain unaltered. As to expression, trophoblast and placental tissue. Localized to both the mononucleate and binucleate cells of the trophectoderm.

The protein localises to the secreted. It is found in the extracellular space. In terms of biological role, PAG2 or a processed derivative of this molecule might represent a factor that binds the LH receptor. The sequence is that of Pregnancy-associated glycoprotein 2 (PAG2) from Bos taurus (Bovine).